The sequence spans 321 residues: PI-PLC X domain-containing protein 3 (321 aa).

The region spanning 22–197 (SIHSIPLTNL…DYQVLVFYHS (176 aa)) is the PI-PLC X-box domain. Catalysis depends on residues His37 and His114.

The chain is PI-PLC X domain-containing protein 3 (PLCXD3) from Bos taurus (Bovine).